Here is a 168-residue protein sequence, read N- to C-terminus: Large ribosomal subunit protein uL10 (168 aa).

It belongs to the universal ribosomal protein uL10 family. In terms of assembly, part of the ribosomal stalk of the 50S ribosomal subunit. The N-terminus interacts with L11 and the large rRNA to form the base of the stalk. The C-terminus forms an elongated spine to which L12 dimers bind in a sequential fashion forming a multimeric L10(L12)X complex.

In terms of biological role, forms part of the ribosomal stalk, playing a central role in the interaction of the ribosome with GTP-bound translation factors. This is Large ribosomal subunit protein uL10 from Ralstonia pickettii (strain 12J).